Reading from the N-terminus, the 106-residue chain is Thioredoxin (106 aa).

Residue Lys3 is modified to N6-acetyllysine. The Thioredoxin domain maps to Lys3–Val106. Position 8 is an N6-succinyllysine (Lys8). Residues Cys32 and Cys35 each act as nucleophile in the active site. A disulfide bond links Cys32 and Cys35. Lys39 carries the N6-acetyllysine modification. An S-nitrosocysteine mark is found at Cys62 and Cys69. Position 73 is an S-nitrosocysteine; alternate (Cys73). Lys95 is modified (N6-acetyllysine; alternate). Position 95 is an N6-succinyllysine; alternate (Lys95).

Belongs to the thioredoxin family. As to quaternary structure, homodimer; disulfide-linked. Interacts with TXNIP through the redox-active site. Interacts with MAP3K5 and CASP3. Interacts with APEX1; the interaction stimulates the FOS/JUN AP-1 DNA-binding activity in a redox-dependent manner. Post-translationally, in the fully reduced protein, both Cys-69 and Cys-73 are nitrosylated in response to nitric oxide (NO). When two disulfide bonds are present in the protein, only Cys-73 is nitrosylated. Cys-73 can serve as donor for nitrosylation of target proteins.

It localises to the nucleus. The protein localises to the cytoplasm. It is found in the secreted. Its function is as follows. Participates in various redox reactions through the reversible oxidation of its active center dithiol to a disulfide and catalyzes dithiol-disulfide exchange reactions. Plays a role in the reversible S-nitrosylation of cysteine residues in target proteins, and thereby contributes to the response to intracellular nitric oxide. Nitrosylates the active site Cys of CASP3 in response to nitric oxide (NO), and thereby inhibits caspase-3 activity. Induces the FOS/JUN AP-1 DNA binding activity in ionizing radiation (IR) cells through its oxidation/reduction status and stimulates AP-1 transcriptional activity. The sequence is that of Thioredoxin (TXN) from Pongo abelii (Sumatran orangutan).